A 53-amino-acid polypeptide reads, in one-letter code: Small ribosomal subunit protein uS14m (53 aa).

Belongs to the universal ribosomal protein uS14 family.

The protein resides in the mitochondrion. In Bigelowiella natans (Pedinomonas minutissima), this protein is Small ribosomal subunit protein uS14m (RPS14).